The following is a 178-amino-acid chain: Caveolin-1 (178 aa).

N-acetylserine is present on Ser-2. Ser-2 carries the post-translational modification Phosphoserine. The required for homooligomerization stretch occupies residues 2 to 94 (SGGKYVDSEG…WKASFTTFTV (93 aa)). The Cytoplasmic portion of the chain corresponds to 2-104 (SGGKYVDSEG…TKYWFYRLLS (103 aa)). Residue Lys-5 is modified to N6-acetyllysine; alternate. Residue Lys-5 forms a Glycyl lysine isopeptide (Lys-Gly) (interchain with G-Cter in ubiquitin); alternate linkage. Position 6 is a phosphotyrosine (Tyr-6). Ser-9 is modified (phosphoserine). Tyr-14 is subject to Phosphotyrosine; by ABL1. Tyr-25 carries the post-translational modification Phosphotyrosine. Residues Lys-26, Lys-30, Lys-39, Lys-47, and Lys-57 each participate in a glycyl lysine isopeptide (Lys-Gly) (interchain with G-Cter in ubiquitin) cross-link. The interaction with CAVIN3 stretch occupies residues 82-94 (DGIWKASFTTFTV). An intramembrane region (helical) is located at residues 105–125 (AVFGIPMALIWGIYFAIVSFL). Over 126–178 (HIWVVVPYIKSFLIEIQCISRVYSIYIHTFCDPLFEAFGKVFSNIRINTQKEI) the chain is Cytoplasmic. The tract at residues 131–142 (VPYIKSFLIEIQ) is interacts with SPRY1, SPRY2, SPRY3 and SPRY4. S-palmitoyl cysteine attachment occurs at residues Cys-143 and Cys-156. The segment at 149-160 (SIYIHTFCDPLF) is interacts with SPRY1, SPRY2, and SPRY4. Residues 167–178 (FSNIRINTQKEI) form an interacts with SPRY1, SPRY2, SPRY3 and SPRY4 region.

This sequence belongs to the caveolin family. As to quaternary structure, homooligomer. Interacts (via the N-terminus) with DPP4; the interaction is direct. Forms a stable heterooligomeric complex with CAV2 that targets to lipid rafts and drives caveolae formation. Interacts with PACSIN2; this interaction induces membrane tubulation. Interacts with BMX, BTK, CTNNB1, CDH1, GLIPR2, JUP, NOSTRIN, SNAP25 and STX1A. Interacts with SLC7A9. Interacts with TGFBR1. Interacts with CAVIN3 (via leucine-zipper domain) in a cholesterol-sensitive manner. Interacts with CAVIN1. Interacts with EHD2 in a cholesterol-dependent manner. Forms a ternary complex with UBXN6 and VCP; mediates CAV1 targeting to lysosomes for degradation. Interacts with ABCG1; this interaction regulates ABCG1-mediated cholesterol efflux. Interacts with NEU3; this interaction enhances NEU3 sialidase activity within caveola. Interacts (via C-terminus) with SPRY1, SPRY2 (via C-terminus), SPRY3, and SPRY4. In terms of processing, phosphorylated at Tyr-14 by ABL1 in response to oxidative stress. Ubiquitinated. Undergo monoubiquitination and multi- and/or polyubiquitination. Monoubiquitination of N-terminal lysines promotes integration in a ternary complex with UBXN6 and VCP which promotes oligomeric CAV1 targeting to lysosomes for degradation. Ubiquitinated by ZNRF1; leading to degradation and modulation of the TLR4-mediated immune response.

It localises to the golgi apparatus membrane. Its subcellular location is the cell membrane. The protein resides in the membrane. The protein localises to the caveola. It is found in the membrane raft. In terms of biological role, may act as a scaffolding protein within caveolar membranes. Forms a stable heterooligomeric complex with CAV2 that targets to lipid rafts and drives caveolae formation. Mediates the recruitment of CAVIN proteins (CAVIN1/2/3/4) to the caveolae. Interacts directly with G-protein alpha subunits and can functionally regulate their activity. Involved in the costimulatory signal essential for T-cell receptor (TCR)-mediated T-cell activation. Its binding to DPP4 induces T-cell proliferation and NF-kappa-B activation in a T-cell receptor/CD3-dependent manner. Recruits CTNNB1 to caveolar membranes and may regulate CTNNB1-mediated signaling through the Wnt pathway. Negatively regulates TGFB1-mediated activation of SMAD2/3 by mediating the internalization of TGFBR1 from membrane rafts leading to its subsequent degradation. Binds 20(S)-hydroxycholesterol (20(S)-OHC). The sequence is that of Caveolin-1 (CAV1) from Rhinolophus ferrumequinum (Greater horseshoe bat).